A 486-amino-acid chain; its full sequence is MTLTIYNTLTRRQEPLETVEPGKVKMYCCGVTVYDYCHLGHARSYIVWDTIRRYLIWRGFEVKYIQNFTDIDDKILNRAKEQGSTMAEVSNRFIDAYFADIRRLNVLDADEYPRVTEHIPEIHQLIQILEEKGLAYAVGGDVYYRVERFPSYGKLSGRELEQMQAGASGRVDVEDSEPKKQHPFDFALWKAAKPGEPAWDSPWGQGRPGWHIECSAMIRSKLGATIDIHGGGGDLIFPHHENEIAQSEAAMNQPLARYWTHNGMVMVNGQKMSKSLGNFITIRELLDGVGSWKGDPVNPMAVRLFVLQAHYRKPLDFTEEAIANAENSWKTLKEGLLFGYQYGEKLGWGQESAIIPELATRFQELGDDDFNFSGGLAVLFELAKELRREGNILVHEGTTKTPSDELQRQWNTLVTLGKVLGLEATPDDETLTQPGLSDTDIEALIEQRQAARKNKNFSESDRIRNELQAQGVTLIDSPQGTRWHRS.

Cys29 contacts Zn(2+). Residues 31–41 carry the 'HIGH' region motif; sequence VTVYDYCHLGH. Residues Cys214, His239, and Glu243 each coordinate Zn(2+). The 'KMSKS' region signature appears at 271–275; that stretch reads KMSKS. Lys274 provides a ligand contact to ATP.

It belongs to the class-I aminoacyl-tRNA synthetase family. In terms of assembly, monomer. Zn(2+) is required as a cofactor.

The protein resides in the cytoplasm. The catalysed reaction is tRNA(Cys) + L-cysteine + ATP = L-cysteinyl-tRNA(Cys) + AMP + diphosphate. The protein is Cysteine--tRNA ligase of Trichormus variabilis (strain ATCC 29413 / PCC 7937) (Anabaena variabilis).